The sequence spans 151 residues: 3-hydroxyacyl-[acyl-carrier-protein] dehydratase FabZ (151 aa).

The active site involves His-58.

The protein belongs to the thioester dehydratase family. FabZ subfamily.

It localises to the cytoplasm. The enzyme catalyses a (3R)-hydroxyacyl-[ACP] = a (2E)-enoyl-[ACP] + H2O. Functionally, involved in unsaturated fatty acids biosynthesis. Catalyzes the dehydration of short chain beta-hydroxyacyl-ACPs and long chain saturated and unsaturated beta-hydroxyacyl-ACPs. This is 3-hydroxyacyl-[acyl-carrier-protein] dehydratase FabZ from Histophilus somni (strain 129Pt) (Haemophilus somnus).